The chain runs to 180 residues: Stathmin-3 (180 aa).

S-palmitoyl cysteine attachment occurs at residues Cys-22 and Cys-24. One can recognise an SLD domain in the interval 38–180 (GDMEVKQLDK…NKEQREEMSG (143 aa)). Phosphoserine is present on residues Ser-50, Ser-60, Ser-65, Ser-68, Ser-72, Ser-73, and Ser-81. A compositionally biased stretch (low complexity) spans 60–74 (SPSDLSPESPVLSSP). Residues 60–81 (SPSDLSPESPVLSSPPKRKDAS) are disordered. Residues 75-179 (PKRKDASLEE…RNKEQREEMS (105 aa)) adopt a coiled-coil conformation.

This sequence belongs to the stathmin family. Interacts with STAT3. Interacts with CLU (secreted form); this interaction may act as an important modulator during neuronal differentiation. In terms of processing, N-terminal palmitoylation promotes specific anchoring to the cytosolic leaflet of Golgi membranes and subsequent vesicular trafficking along dendrites and axons. Neuronal Stathmins are substrates for palmitoyltransferases ZDHHC3, ZDHHC7 and ZDHHC15. In terms of tissue distribution, neuron specific.

The protein resides in the golgi apparatus. The protein localises to the cell projection. It is found in the growth cone. It localises to the axon. Its subcellular location is the cytoplasm. The protein resides in the cytosol. Its function is as follows. Exhibits microtubule-destabilizing activity, which is antagonized by STAT3. This is Stathmin-3 (Stmn3) from Mus musculus (Mouse).